The chain runs to 346 residues: Outer membrane protein A (346 aa).

Positions 1-21 (MKKTAIAIAVALAGFATVAQA) are cleaved as a signal peptide. Transmembrane regions (beta stranded) follow at residues 27-37 (TWYTGAKLGWS), 55-66 (QLGAGAFGGYQV), 70-78 (VGFEMGYDW), 96-107 (QGVQLTAKLGYP), 112-120 (LDIYTRLGG), 142-151 (PVFAGGVEYA), 156-163 (IATRLEYQ), and 182-190 (MLSLGVSYR). The tract at residues 197-208 (APVVAPAPAPAP) is hinge-like. A run of 4 repeats spans residues 201–202 (AP), 203–204 (AP), 205–206 (AP), and 207–208 (AP). The segment at 201-208 (APAPAPAP) is 4 X 2 AA tandem repeats of A-P. One can recognise an OmpA-like domain in the interval 210–338 (VQTKHFTLKS…RVEIEVKGIK (129 aa)). A disulfide bridge links Cys311 with Cys323.

The protein belongs to the outer membrane OOP (TC 1.B.6) superfamily. OmpA family. As to quaternary structure, monomer and homodimer.

It localises to the cell outer membrane. In terms of biological role, with TolR probably plays a role in maintaining the position of the peptidoglycan cell wall in the periplasm. Acts as a porin with low permeability that allows slow penetration of small solutes; an internal gate slows down solute passage. Its function is as follows. Required for conjugation with F-type plasmids; probably serves as the mating receptor on recipient cells. This chain is Outer membrane protein A, found in Escherichia coli O157:H7.